Reading from the N-terminus, the 271-residue chain is Cytosolic Fe-S cluster assembly factor NUBP2 (271 aa).

Met-1 is modified (N-acetylmethionine). 22–29 (GKGGVGKS) contacts ATP. Residues Cys-196 and Cys-199 each contribute to the [4Fe-4S] cluster site.

It belongs to the Mrp/NBP35 ATP-binding proteins family. NUBP2/CFD1 subfamily. Heterotetramer of 2 NUBP1 and 2 NUBP2 chains. Interacts with KIFC1. Interacts with NUBP1. It depends on [4Fe-4S] cluster as a cofactor.

Its subcellular location is the nucleus. The protein localises to the cytoplasm. The protein resides in the cytoskeleton. It is found in the microtubule organizing center. It localises to the centrosome. Its subcellular location is the cilium axoneme. The protein localises to the centriole. In terms of biological role, component of the cytosolic iron-sulfur (Fe/S) protein assembly (CIA) machinery. Required for maturation of extramitochondrial Fe-S proteins. The NUBP1-NUBP2 heterotetramer forms a Fe-S scaffold complex, mediating the de novo assembly of an Fe-S cluster and its transfer to target apoproteins. Negatively regulates cilium formation and structure. This chain is Cytosolic Fe-S cluster assembly factor NUBP2, found in Bos taurus (Bovine).